Consider the following 552-residue polypeptide: DNA ligase (552 aa).

E229 contacts ATP. K231 acts as the N6-AMP-lysine intermediate in catalysis. Positions 236 and 283 each coordinate ATP. 2 residues coordinate Mg(2+): E283 and E377. The ATP site is built by K382 and K397.

Belongs to the ATP-dependent DNA ligase family. As to quaternary structure, interacts with host TOP2A and TOP2B. Mg(2+) serves as cofactor.

It is found in the host cytoplasm. The enzyme catalyses ATP + (deoxyribonucleotide)n-3'-hydroxyl + 5'-phospho-(deoxyribonucleotide)m = (deoxyribonucleotide)n+m + AMP + diphosphate.. Functionally, DNA ligase that seals nicks in double-stranded DNA during DNA replication, DNA recombination and DNA repair. Recruits cellular topoisomerase II to sites of viral replication and assembly. This chain is DNA ligase (OPG180), found in Vaccinia virus (strain Ankara) (VACV).